A 457-amino-acid chain; its full sequence is Guanine nucleotide-binding protein subunit alpha homolog (457 aa).

In terms of domain architecture, G-alpha spans 131-457; sequence RQVKLLLLGA…QRNLNALMLQ (327 aa). The interval 134 to 147 is G1 motif; that stretch reads KLLLLGAGESGKST. Residues 139–146, 274–280, 299–303, 369–372, and Ala-429 contribute to the GTP site; these read GAGESGKS, LHCRKAT, DVGGQ, and NKTD. Ser-146 and Thr-280 together coordinate Mg(2+). A G2 motif region spans residues 272–280; the sequence is DILHCRKAT. The interval 295–304 is G3 motif; the sequence is FVFVDVGGQR. The interval 365 to 372 is G4 motif; it reads ILFLNKTD. The tract at residues 427 to 432 is G5 motif; sequence TTAIDT.

This sequence belongs to the G-alpha family. G(12) subfamily. G proteins are composed of 3 units; alpha, beta and gamma. The alpha chain contains the guanine nucleotide binding site. In ovary, expressed in nurse cells and oocyte. In early embryos, distributed uniformly. At the extended germband stage, accumulates in the mesoderm.

The protein localises to the cytoplasm. May play a role in a signal transduction pathway used during gastrulation. Required specifically for the ventral furrow and posterior midgut invaginations, where it is necessary for coordinating cell shape changes. Its function is as follows. Guanine nucleotide-binding proteins (G proteins) are involved as modulators or transducers in various transmembrane signaling systems. This chain is Guanine nucleotide-binding protein subunit alpha homolog (cta), found in Drosophila melanogaster (Fruit fly).